A 143-amino-acid polypeptide reads, in one-letter code: MSIIKEFKEFAVKGNVMDLAIGVIIGGAFSKIVDSVVKDLIMPVIGVLTGGLDFSNKFVLLGQIPASFKGNPESFKDLQAAGVATFGYGSFITVLINFIILAFIIFLMVKFINKLRKPEEAAPAATPEDVLLLREIRDSLKQR.

2 helical membrane passes run 10–30 and 89–109; these read FAVK…GAFS and GSFI…FLMV.

This sequence belongs to the MscL family. In terms of assembly, homopentamer.

Its subcellular location is the cell inner membrane. Functionally, channel that opens in response to stretch forces in the membrane lipid bilayer. May participate in the regulation of osmotic pressure changes within the cell. This Burkholderia pseudomallei (strain 668) protein is Large-conductance mechanosensitive channel.